Consider the following 348-residue polypeptide: Dihydroorotase (348 aa).

Residues H14 and H16 each coordinate Zn(2+). Substrate-binding positions include H16–R18 and N42. Zn(2+) contacts are provided by K100, H137, and H175. K100 bears the N6-carboxylysine mark. Residue H137 coordinates substrate. Position 220 (L220) interacts with substrate. D248 provides a ligand contact to Zn(2+). D248 is a catalytic residue. H252 and A264 together coordinate substrate.

Belongs to the metallo-dependent hydrolases superfamily. DHOase family. Class II DHOase subfamily. Homodimer. It depends on Zn(2+) as a cofactor.

It carries out the reaction (S)-dihydroorotate + H2O = N-carbamoyl-L-aspartate + H(+). It functions in the pathway pyrimidine metabolism; UMP biosynthesis via de novo pathway; (S)-dihydroorotate from bicarbonate: step 3/3. In terms of biological role, catalyzes the reversible cyclization of carbamoyl aspartate to dihydroorotate. This chain is Dihydroorotase, found in Azotobacter vinelandii (strain DJ / ATCC BAA-1303).